The sequence spans 491 residues: 1-aminocyclopropane-1-carboxylate synthase (491 aa).

The residue at position 278 (lysine 278) is an N6-(pyridoxal phosphate)lysine.

It belongs to the class-I pyridoxal-phosphate-dependent aminotransferase family. In terms of assembly, homodimer. The cofactor is pyridoxal 5'-phosphate.

It catalyses the reaction S-adenosyl-L-methionine = 1-aminocyclopropane-1-carboxylate + S-methyl-5'-thioadenosine + H(+). It participates in alkene biosynthesis; ethylene biosynthesis via S-adenosyl-L-methionine; ethylene from S-adenosyl-L-methionine: step 1/2. Functionally, catalyzes the formation of 1-aminocyclopropane-1-carboxylate, a direct precursor of ethylene in higher plants. In Nicotiana tabacum (Common tobacco), this protein is 1-aminocyclopropane-1-carboxylate synthase (ACS1).